The sequence spans 131 residues: Small ribosomal subunit protein eS8 (131 aa).

Residues 1–37 (MKLGAFYKGGDLKKPSGGKKRRVRRTKKKALGGGPPQ) are disordered. The segment covering 16–30 (SGGKKRRVRRTKKKA) has biased composition (basic residues).

It belongs to the eukaryotic ribosomal protein eS8 family. In terms of assembly, part of the 30S ribosomal subunit.

The chain is Small ribosomal subunit protein eS8 from Pyrobaculum neutrophilum (strain DSM 2338 / JCM 9278 / NBRC 100436 / V24Sta) (Thermoproteus neutrophilus).